A 136-amino-acid chain; its full sequence is Histone H3 (136 aa).

Residues 1–43 (MARTKQTARKSTGGKAPRKQLASKAARKSAPSTGGVKKPHRYK) are disordered. An N6,N6,N6-trimethyllysine; alternate mark is found at Lys5 and Lys10. Lys5 bears the N6,N6-dimethyllysine; alternate mark. At Lys5 the chain carries N6-methyllysine; alternate. Residue Lys10 is modified to N6-acetyllysine; alternate. Ser11 carries the post-translational modification Phosphoserine. The residue at position 15 (Lys15) is an N6,N6-dimethyllysine; alternate. Lys15, Lys19, Lys24, Lys28, and Lys37 each carry N6-methyllysine; alternate. An N6-acetyllysine; alternate mark is found at Lys15, Lys19, Lys24, Lys28, and Lys37. N6,N6,N6-trimethyllysine; alternate occurs at positions 28 and 37. 2 positions are modified to N6,N6-dimethyllysine; alternate: Lys28 and Lys37. N6-acetyllysine is present on residues Lys57 and Lys65. An N6,N6,N6-trimethyllysine; alternate modification is found at Lys80. Position 80 is an N6,N6-dimethyllysine; alternate (Lys80). Position 80 is an N6-methyllysine; alternate (Lys80).

The protein belongs to the histone H3 family. In terms of assembly, the nucleosome is a histone octamer containing two molecules each of H2A, H2B, H3 and H4 assembled in one H3-H4 heterotetramer and two H2A-H2B heterodimers. The octamer wraps approximately 147 bp of DNA. Post-translationally, phosphorylated to form H3S10ph. H3S10ph promotes subsequent H3K14ac formation and is required for transcriptional activation through TBP recruitment to the promoters. Mono-, di- and trimethylated by the COMPASS complex to form H3K4me1/2/3. H3K4me activates gene expression by regulating transcription elongation and plays a role in telomere length maintenance. H3K4me enrichment correlates with transcription levels, and occurs in a 5' to 3' gradient with H3K4me3 enrichment at the 5'-end of genes, shifting to H3K4me2 and then H3K4me1. Trimethylated by methyltransferase dim-5 to form H3K9me3. H3K9me3, but not H3K9me2, marks chromatin regions for cytosine methylation. Methylated by set-2 to form H3K36me. H3K36me represses gene expression. Methylated by dot-1 to form H3K79me. H3K79me is required for association of SIR proteins with telomeric regions and for telomeric silencing. The COMPASS-mediated formation of H3K4me2/3 and the dot-1-mediated formation of H3K79me require H2BK123ub1. In terms of processing, acetylation of histone H3 leads to transcriptional activation. H3K14ac formation by gcn-5 is promoted by H3S10ph. H3K14ac can also be formed by esa-1. H3K56ac formation occurs predominantly in newly synthesized H3 molecules during G1, S and G2/M of the cell cycle and may be involved in DNA repair.

Its subcellular location is the nucleus. It localises to the chromosome. Core component of nucleosome. Nucleosomes wrap and compact DNA into chromatin, limiting DNA accessibility to the cellular machineries which require DNA as a template. Histones thereby play a central role in transcription regulation, DNA repair, DNA replication and chromosomal stability. DNA accessibility is regulated via a complex set of post-translational modifications of histones, also called histone code, and nucleosome remodeling. The protein is Histone H3 (hh3) of Neurospora crassa (strain ATCC 24698 / 74-OR23-1A / CBS 708.71 / DSM 1257 / FGSC 987).